Reading from the N-terminus, the 781-residue chain is Molybdenum cofactor sulfurase (781 aa).

Lys246 is subject to N6-(pyridoxal phosphate)lysine. The active site involves Cys413. The MOSC domain maps to 635 to 781; it reads LRLLRQSGQR…MTCGDVVLVE (147 aa). Phosphoserine is present on Ser734.

The protein belongs to the class-V pyridoxal-phosphate-dependent aminotransferase family. MOCOS subfamily. Pyridoxal 5'-phosphate serves as cofactor.

It catalyses the reaction Mo-molybdopterin + L-cysteine + AH2 = thio-Mo-molybdopterin + L-alanine + A + H2O. It participates in cofactor biosynthesis; molybdopterin biosynthesis. Its function is as follows. Sulfurates the molybdenum cofactor. Sulfation of molybdenum is essential for xanthine dehydrogenase (XDH) and aldehyde oxidase (ADO) enzymes in which molybdenum cofactor is liganded by 1 oxygen and 1 sulfur atom in active form. The chain is Molybdenum cofactor sulfurase from Drosophila melanogaster (Fruit fly).